The chain runs to 593 residues: Aspartate--tRNA(Asp/Asn) ligase (593 aa).

Residue Glu173 coordinates L-aspartate. The segment at 197–200 (QLFK) is aspartate. Arg219 contacts L-aspartate. ATP is bound by residues 219–221 (RDE) and Gln228. His451 contacts L-aspartate. Glu485 contacts ATP. Arg492 is an L-aspartate binding site. 537-540 (GIDR) lines the ATP pocket.

Belongs to the class-II aminoacyl-tRNA synthetase family. Type 1 subfamily. Homodimer.

The protein localises to the cytoplasm. The enzyme catalyses tRNA(Asx) + L-aspartate + ATP = L-aspartyl-tRNA(Asx) + AMP + diphosphate. Functionally, aspartyl-tRNA synthetase with relaxed tRNA specificity since it is able to aspartylate not only its cognate tRNA(Asp) but also tRNA(Asn). Reaction proceeds in two steps: L-aspartate is first activated by ATP to form Asp-AMP and then transferred to the acceptor end of tRNA(Asp/Asn). The sequence is that of Aspartate--tRNA(Asp/Asn) ligase from Legionella pneumophila (strain Paris).